Here is a 187-residue protein sequence, read N- to C-terminus: Chromophore lyase CpcS/CpeS 2 (187 aa).

The protein belongs to the CpcS/CpeS biliprotein lyase family.

In terms of biological role, covalently attaches a chromophore to Cys residue(s) of phycobiliproteins. This Synechococcus sp. (strain JA-3-3Ab) (Cyanobacteria bacterium Yellowstone A-Prime) protein is Chromophore lyase CpcS/CpeS 2.